The primary structure comprises 325 residues: uncharacterized protein (325 aa).

Residues 37–85 (EKPTYTPAKPVKKAPSVVQPRRVSRTLRSSESVHTNHGPERVFESPTPA) form a disordered region. Position 52 is a phosphoserine (serine 52). Residues 62-71 (TLRSSESVHT) show a composition bias toward polar residues. An FCP1 homology domain is found at 153-311 (EDEGKKCLIL…IDLIPFLEHL (159 aa)).

This is an uncharacterized protein from Schizosaccharomyces pombe (strain 972 / ATCC 24843) (Fission yeast).